The sequence spans 271 residues: Low choriolytic enzyme (271 aa).

Positions 1–20 (MDLLAKASVLLLLLLSLSNA) are cleaved as a signal peptide. A propeptide spans 21 to 71 (QTDNMEEAENGSSKEEIDESELEDVSSIIFRMNNNSMEELLEGDLVLPKTR) (activation peptide). Residues Asn-30 and Asn-54 are each glycosylated (N-linked (GlcNAc...) asparagine). The region spanning 72–271 (NAMKCFGAPD…ILRVNKLYKC (200 aa)) is the Peptidase M12A domain. 3 disulfide bridges follow: Cys-76–Cys-83, Cys-123–Cys-271, and Cys-144–Cys-164. His-172 lines the Zn(2+) pocket. Glu-173 is a catalytic residue. Zn(2+) is bound by residues His-176 and His-182. An N-linked (GlcNAc...) asparagine glycan is attached at Asn-211.

Zn(2+) serves as cofactor.

Its subcellular location is the zymogen granule. It catalyses the reaction Hydrolysis of the inner layer of fish egg envelope. Also hydrolysis of casein and small molecule substrates such as succinyl-Leu-Leu-Val-Tyr-|-7-(4-methyl)coumarylamide.. Its function is as follows. Participates in the breakdown of the egg envelope, which is derived from the egg extracellular matrix, at the time of hatching. Thus allowing the newly hatched fish to swim free. LCE solubilizes the egg envelope only after it has been swollen by the action of HCE. The polypeptide is Low choriolytic enzyme (lce) (Oryzias latipes (Japanese rice fish)).